A 437-amino-acid polypeptide reads, in one-letter code: ATP-dependent RNA helicase RhlB (437 aa).

Positions Gln-9 to Ala-37 match the Q motif motif. The region spanning Leu-40–Val-219 is the Helicase ATP-binding domain. Ala-53–Thr-60 serves as a coordination point for ATP. Residues Asp-165 to Asp-168 carry the DEAD box motif. The region spanning Ala-245–Ile-390 is the Helicase C-terminal domain. The disordered stretch occupies residues Ile-397–Ser-437. Residues Gly-417–Gln-428 show a composition bias toward basic residues.

It belongs to the DEAD box helicase family. RhlB subfamily. In terms of assembly, component of the RNA degradosome, which is a multiprotein complex involved in RNA processing and mRNA degradation.

It localises to the cytoplasm. The enzyme catalyses ATP + H2O = ADP + phosphate + H(+). DEAD-box RNA helicase involved in RNA degradation. Has RNA-dependent ATPase activity and unwinds double-stranded RNA. The polypeptide is ATP-dependent RNA helicase RhlB (Vibrio parahaemolyticus serotype O3:K6 (strain RIMD 2210633)).